The primary structure comprises 338 residues: Ketol-acid reductoisomerase (NADP(+)) (338 aa).

One can recognise a KARI N-terminal Rossmann domain in the interval 1–181; the sequence is MQVYYDKDCD…GGGRTGIIET (181 aa). NADP(+) contacts are provided by residues 24–27, Arg-47, Ser-50, Ser-52, and 82–85; these read FGSQ and DEFQ. His-107 is a catalytic residue. Gly-133 lines the NADP(+) pocket. A KARI C-terminal knotted domain is found at 182-327; that stretch reads TFRDECETDL…RKLRAMMPWI (146 aa). The Mg(2+) site is built by Asp-190, Glu-194, Glu-226, and Glu-230. A substrate-binding site is contributed by Ser-251.

This sequence belongs to the ketol-acid reductoisomerase family. Requires Mg(2+) as cofactor.

The enzyme catalyses (2R)-2,3-dihydroxy-3-methylbutanoate + NADP(+) = (2S)-2-acetolactate + NADPH + H(+). It carries out the reaction (2R,3R)-2,3-dihydroxy-3-methylpentanoate + NADP(+) = (S)-2-ethyl-2-hydroxy-3-oxobutanoate + NADPH + H(+). The protein operates within amino-acid biosynthesis; L-isoleucine biosynthesis; L-isoleucine from 2-oxobutanoate: step 2/4. Its pathway is amino-acid biosynthesis; L-valine biosynthesis; L-valine from pyruvate: step 2/4. Involved in the biosynthesis of branched-chain amino acids (BCAA). Catalyzes an alkyl-migration followed by a ketol-acid reduction of (S)-2-acetolactate (S2AL) to yield (R)-2,3-dihydroxy-isovalerate. In the isomerase reaction, S2AL is rearranged via a Mg-dependent methyl migration to produce 3-hydroxy-3-methyl-2-ketobutyrate (HMKB). In the reductase reaction, this 2-ketoacid undergoes a metal-dependent reduction by NADPH to yield (R)-2,3-dihydroxy-isovalerate. In Hydrogenovibrio crunogenus (strain DSM 25203 / XCL-2) (Thiomicrospira crunogena), this protein is Ketol-acid reductoisomerase (NADP(+)).